Reading from the N-terminus, the 210-residue chain is Imidazoleglycerol-phosphate dehydratase (210 aa).

Belongs to the imidazoleglycerol-phosphate dehydratase family.

The protein localises to the cytoplasm. The catalysed reaction is D-erythro-1-(imidazol-4-yl)glycerol 3-phosphate = 3-(imidazol-4-yl)-2-oxopropyl phosphate + H2O. The protein operates within amino-acid biosynthesis; L-histidine biosynthesis; L-histidine from 5-phospho-alpha-D-ribose 1-diphosphate: step 6/9. The protein is Imidazoleglycerol-phosphate dehydratase of Mycobacterium bovis (strain ATCC BAA-935 / AF2122/97).